The following is a 264-amino-acid chain: Putative hydro-lyase Cgl2544/cg2803 (264 aa).

This sequence belongs to the D-glutamate cyclase family.

This chain is Putative hydro-lyase Cgl2544/cg2803, found in Corynebacterium glutamicum (strain ATCC 13032 / DSM 20300 / JCM 1318 / BCRC 11384 / CCUG 27702 / LMG 3730 / NBRC 12168 / NCIMB 10025 / NRRL B-2784 / 534).